The sequence spans 435 residues: tRNA(Ile)-lysidine synthase (435 aa).

25–30 (SGGLDS) lines the ATP pocket.

It belongs to the tRNA(Ile)-lysidine synthase family.

It is found in the cytoplasm. It catalyses the reaction cytidine(34) in tRNA(Ile2) + L-lysine + ATP = lysidine(34) in tRNA(Ile2) + AMP + diphosphate + H(+). Ligates lysine onto the cytidine present at position 34 of the AUA codon-specific tRNA(Ile) that contains the anticodon CAU, in an ATP-dependent manner. Cytidine is converted to lysidine, thus changing the amino acid specificity of the tRNA from methionine to isoleucine. In Photobacterium profundum (strain SS9), this protein is tRNA(Ile)-lysidine synthase.